The sequence spans 588 residues: Phosphatidylinositol-3,5-bisphosphate 3-phosphatase mtm-1 (588 aa).

In terms of domain architecture, GRAM spans 20 to 91 (IQESIDLKLL…GQVSRIEKVG (72 aa)). The region spanning 164 to 543 (GWKIYSAEKE…CGLHVWIDYY (380 aa)) is the Myotubularin phosphatase domain. Asn293, Asn316, and Ile317 together coordinate a 1,2-diacyl-sn-glycero-3-phospho-(1D-myo-inositol-3,5-bisphosphate). A 1,2-diacyl-sn-glycero-3-phospho-(1D-myo-inositol-3-phosphate)-binding residues include Asn293, Asn316, and Ile317. The Phosphocysteine intermediate role is filled by Cys378. A 1,2-diacyl-sn-glycero-3-phospho-(1D-myo-inositol-3,5-bisphosphate) is bound by residues Ser379, Asp380, Gly381, Trp382, Asp383, Arg384, Lys420, and Arg424. Residues Ser379, Asp380, Gly381, Trp382, Asp383, and Arg384 each coordinate a 1,2-diacyl-sn-glycero-3-phospho-(1D-myo-inositol-3-phosphate). Ser379 lines the phosphate pocket. 4 residues coordinate phosphate: Gly381, Trp382, Asp383, and Arg384. Arg424 contacts a 1,2-diacyl-sn-glycero-3-phospho-(1D-myo-inositol-3-phosphate). Positions 563-588 (AQFVDEKKQLLDEIMALDDAAQKLTA) form a coiled coil.

This sequence belongs to the protein-tyrosine phosphatase family. Non-receptor class myotubularin subfamily. Expressed in embryo, larva and in adults. Expressed in a few head and tail neurons. Expressed in hypodermis, body wall and pharyngeal muscles, sheath cells, vulva, distal tip cells and coelomocytes.

The protein localises to the cell membrane. Its subcellular location is the cell projection. It is found in the phagocytic cup. It localises to the apical cell membrane. The protein resides in the cytoplasmic granule membrane. It carries out the reaction a 1,2-diacyl-sn-glycero-3-phospho-(1D-myo-inositol-3,5-bisphosphate) + H2O = a 1,2-diacyl-sn-glycero-3-phospho-(1D-myo-inositol-5-phosphate) + phosphate. The catalysed reaction is a 1,2-diacyl-sn-glycero-3-phospho-(1D-myo-inositol-3-phosphate) + H2O = a 1,2-diacyl-sn-glycero-3-phospho-(1D-myo-inositol) + phosphate. The enzyme catalyses 1,2-dioctanoyl-sn-glycero-3-phospho-(1-D-myo-inositol-3-phosphate) + H2O = 1,2-dioctanoyl-sn-glycero-3-phospho-(1D-myo-inositol) + phosphate. Its function is as follows. Lipid phosphatase that specifically dephosphorylates phosphatidylinositol 3-phosphate (PI3P) and phosphatidylinositol 3,5-bisphosphate (PI(3,5)P2). Negatively regulates accumulation of PI3P on intracellular vesicles. Negatively regulates phagocytosis of apoptotic cells probably by limiting the recruitment and/or the activation of ced-5, ced-2 and ced-12 complex. In addition, may positively regulate phagosome maturation by promoting recycling of apoptotic receptor ced-1 back to the plasma membrane. Essential for embryonic and larval development. May promote migration of distal tip cells. The protein is Phosphatidylinositol-3,5-bisphosphate 3-phosphatase mtm-1 of Caenorhabditis elegans.